Here is a 292-residue protein sequence, read N- to C-terminus: 4-hydroxy-tetrahydrodipicolinate synthase (292 aa).

Thr44 is a binding site for pyruvate. Tyr132 serves as the catalytic Proton donor/acceptor. Lys160 serves as the catalytic Schiff-base intermediate with substrate. Position 202 (Ile202) interacts with pyruvate.

This sequence belongs to the DapA family. In terms of assembly, homotetramer; dimer of dimers.

The protein localises to the cytoplasm. The enzyme catalyses L-aspartate 4-semialdehyde + pyruvate = (2S,4S)-4-hydroxy-2,3,4,5-tetrahydrodipicolinate + H2O + H(+). It functions in the pathway amino-acid biosynthesis; L-lysine biosynthesis via DAP pathway; (S)-tetrahydrodipicolinate from L-aspartate: step 3/4. Its function is as follows. Catalyzes the condensation of (S)-aspartate-beta-semialdehyde [(S)-ASA] and pyruvate to 4-hydroxy-tetrahydrodipicolinate (HTPA). The polypeptide is 4-hydroxy-tetrahydrodipicolinate synthase (Magnetococcus marinus (strain ATCC BAA-1437 / JCM 17883 / MC-1)).